Reading from the N-terminus, the 243-residue chain is Ubiquinone biosynthesis O-methyltransferase (243 aa).

Positions 45, 65, 86, and 130 each coordinate S-adenosyl-L-methionine.

This sequence belongs to the methyltransferase superfamily. UbiG/COQ3 family.

It carries out the reaction a 3-demethylubiquinol + S-adenosyl-L-methionine = a ubiquinol + S-adenosyl-L-homocysteine + H(+). It catalyses the reaction a 3-(all-trans-polyprenyl)benzene-1,2-diol + S-adenosyl-L-methionine = a 2-methoxy-6-(all-trans-polyprenyl)phenol + S-adenosyl-L-homocysteine + H(+). The protein operates within cofactor biosynthesis; ubiquinone biosynthesis. In terms of biological role, O-methyltransferase that catalyzes the 2 O-methylation steps in the ubiquinone biosynthetic pathway. The polypeptide is Ubiquinone biosynthesis O-methyltransferase (Idiomarina loihiensis (strain ATCC BAA-735 / DSM 15497 / L2-TR)).